Here is a 469-residue protein sequence, read N- to C-terminus: UDP-N-acetylmuramate--L-alanine ligase (469 aa).

122–128 contacts ATP; that stretch reads GTHGKTT.

The protein belongs to the MurCDEF family.

The protein localises to the cytoplasm. It carries out the reaction UDP-N-acetyl-alpha-D-muramate + L-alanine + ATP = UDP-N-acetyl-alpha-D-muramoyl-L-alanine + ADP + phosphate + H(+). It participates in cell wall biogenesis; peptidoglycan biosynthesis. Cell wall formation. This Legionella pneumophila (strain Paris) protein is UDP-N-acetylmuramate--L-alanine ligase.